Reading from the N-terminus, the 65-residue chain is Large ribosomal subunit protein bL35 (65 aa).

The interval 1-28 (MPKIKTNRGAAKRFRKTGSGKIRRNKAF) is disordered. The segment covering 10–26 (AAKRFRKTGSGKIRRNK) has biased composition (basic residues).

The protein belongs to the bacterial ribosomal protein bL35 family.

The protein is Large ribosomal subunit protein bL35 of Syntrophotalea carbinolica (strain DSM 2380 / NBRC 103641 / GraBd1) (Pelobacter carbinolicus).